Consider the following 528-residue polypeptide: Putative ABC transporter ATP-binding protein MA_1418 (528 aa).

ABC transporter domains lie at 2–242 and 262–494; these read IELR…TNLT and ISVK…SDYK. Residues 36–43 and 294–301 each bind ATP; these read GHSAAGKT and GENGSGKT.

It belongs to the ABC transporter superfamily.

The protein resides in the cell membrane. In terms of biological role, probably part of an ABC transporter complex. Responsible for energy coupling to the transport system. The protein is Putative ABC transporter ATP-binding protein MA_1418 of Methanosarcina acetivorans (strain ATCC 35395 / DSM 2834 / JCM 12185 / C2A).